A 112-amino-acid polypeptide reads, in one-letter code: Transcriptional regulator WhiD (112 aa).

Positions 22–86 (ACRGVDSSLF…GGLTEDEREE (65 aa)) constitute a 4Fe-4S Wbl-type domain. Residues Cys-23, Cys-53, Cys-56, and Cys-62 each contribute to the [4Fe-4S] cluster site.

Belongs to the WhiB family. As to quaternary structure, the 4Fe-4S form is a monomer; upon oxidation forms a disulfide-bonded homodimer. [4Fe-4S] cluster serves as cofactor. Post-translationally, can be nitrosylated by NO, 8 NO react per cluster. These complexes are quite stable under anaerobic conditions, but degrade slowly aerobically. Upon Fe-S cluster removal intramolecular disulfide bonds are formed.

It localises to the cytoplasm. In terms of biological role, acts as a transcriptional regulator. Probably redox-responsive. The apo- but not holo-form probably binds DNA. Plays a positive role in prespore maturation and the initiation of sporulation septation. This Streptomyces coelicolor (strain ATCC BAA-471 / A3(2) / M145) protein is Transcriptional regulator WhiD (whiD).